The primary structure comprises 266 residues: 15-hydroxyprostaglandin dehydrogenase [NAD(+)] (266 aa).

Residues 12 to 20 (GAAQGIGRA), 36 to 37 (DW), 63 to 65 (CDV), and Asn91 contribute to the NAD(+) site. Substrate contacts are provided by Ser138 and Gln148. Tyr151 serves as the catalytic Proton acceptor. NAD(+)-binding positions include 151–155 (YCASK) and 186–188 (VDT).

Belongs to the short-chain dehydrogenases/reductases (SDR) family. As to quaternary structure, homodimer.

Its subcellular location is the cytoplasm. The catalysed reaction is prostaglandin E2 + NAD(+) = 15-oxoprostaglandin E2 + NADH + H(+). It catalyses the reaction (15S)-hydroxy-(5Z,8Z,11Z,13E)-eicosatetraenoate + NAD(+) = 15-oxo-(5Z,8Z,11Z,13E)-eicosatetraenoate + NADH + H(+). It carries out the reaction (11R)-hydroxy-(5Z,8Z,12E,14Z)-eicosatetraenoate + NAD(+) = 11-oxo-(5Z,8Z,12E,14Z)-eicosatetraenoate + NADH + H(+). The enzyme catalyses lipoxin A4 + NAD(+) = 15-oxo-(5S,6R)-dihydroxy-(7E,9E,11Z,13E)-eicosatetraenoate + NADH + H(+). The catalysed reaction is 15-oxo-(5S,6R)-dihydroxy-(7E,9E,11Z)-eicosatrienoate + NADH + H(+) = (5S,6R,15S)-trihydroxy-(7E,9E,11Z)-eicosatrienoate + NAD(+). It catalyses the reaction prostaglandin A1 + NAD(+) = 15-oxo-prostaglandin A1 + NADH + H(+). It carries out the reaction prostaglandin E1 + NAD(+) = 15-oxoprostaglandin E1 + NADH + H(+). The enzyme catalyses 14-hydroxy-(4Z,7Z,10Z,12E,16Z,19Z)-docosahexaenoate + NAD(+) = 14-oxo-(4Z,7Z,10Z,12E,16Z,19Z)-docosahexaenoate + NADH + H(+). The catalysed reaction is resolvin E1 + NAD(+) = 18-oxo-resolvin E1 + NADH + H(+). It catalyses the reaction resolvin D1 + NAD(+) = 8-oxoresolvin D1 + NADH + H(+). It carries out the reaction resolvin D1 + NAD(+) = 17-oxoresolvin D1 + NADH + H(+). The enzyme catalyses resolvin D2 + NAD(+) = 7-oxoresolvin D2 + NADH + H(+). The catalysed reaction is resolvin D2 + NAD(+) = 16-oxoresolvin D2 + NADH + H(+). Its function is as follows. Catalyzes the NAD-dependent dehydrogenation (oxidation) of a broad array of hydroxylated polyunsaturated fatty acids (mainly eicosanoids and docosanoids, including prostaglandins, lipoxins and resolvins), yielding their corresponding keto (oxo) metabolites. Decreases the levels of the pro-proliferative prostaglandins such as prostaglandin E2 (whose activity is increased in cancer because of an increase in the expression of cyclooxygenase 2) and generates oxo-fatty acid products that can profoundly influence cell function by abrogating pro-inflammatory cytokine expression. Converts resolvins E1, D1 and D2 to their oxo products, which represents a mode of resolvin inactivation. Resolvin E1 plays important roles during the resolution phase of acute inflammation, while resolvins D1 and D2 have a unique role in obesity-induced adipose inflammation. In Bos taurus (Bovine), this protein is 15-hydroxyprostaglandin dehydrogenase [NAD(+)] (HPGD).